The following is a 404-amino-acid chain: Metacaspase-1 (404 aa).

Residues 1–97 (MHHHHQQPSY…NPQAFGHGAP (97 aa)) are disordered. Residues histidine 195 and cysteine 251 contribute to the active site.

It belongs to the peptidase C14B family.

Functionally, involved in cell death (apoptosis). This chain is Metacaspase-1 (casA), found in Emericella nidulans (strain FGSC A4 / ATCC 38163 / CBS 112.46 / NRRL 194 / M139) (Aspergillus nidulans).